Reading from the N-terminus, the 592-residue chain is Probable 6-phosphofructo-2-kinase C222.13c (592 aa).

The interval 1–80 (MSNTGSARTE…PANDVEKMEV (80 aa)) is disordered. The segment covering 57-66 (SIFKREELTP) has biased composition (basic and acidic residues). 150–157 (GIPATGKS) is a binding site for ATP. Residues Asp-235 and Cys-266 contribute to the active site. Arg-300 lines the beta-D-fructose 6-phosphate pocket. Residue His-527 is the Proton donor of the active site.

The protein localises to the cytoplasm. It localises to the nucleus. It catalyses the reaction beta-D-fructose 6-phosphate + ATP = beta-D-fructose 2,6-bisphosphate + ADP + H(+). Its function is as follows. Synthesis of fructose 2,6-bisphosphate. This chain is Probable 6-phosphofructo-2-kinase C222.13c, found in Schizosaccharomyces pombe (strain 972 / ATCC 24843) (Fission yeast).